We begin with the raw amino-acid sequence, 97 residues long: Ig heavy chain V region 914 (97 aa).

Positions 1–97 constitute an Ig-like domain; the sequence is EVKLVESGGG…EDTAMYYCAR (97 aa).

The chain is Ig heavy chain V region 914 from Mus musculus (Mouse).